We begin with the raw amino-acid sequence, 429 residues long: MTDRSAAPINASLKAADPAIAGLIDQEQMRQETHLELIASENFTSKAVMEAQGSVLTNKYAEGLPHKRYYGGCEHVDAIEELAITRAKQLFGAAWANVQPHSGAQANFAVFLALLQPGDTILGMDLSHGGHLTHGSPVNVSGKWFNVVQYGVDKETQRLDMEAIRKLALEHKPKLIICGYSAYPRSIDFAAFRSIADEVGAYLLADMAHIAGLVAAGVHASPVPHCDVVTTTTHKTLRGPRGGLILCRDAEFARRFDKAVFPGSQGGPLEHVIAAKAVAFGEALQPDFKAYSRQVVANAQALAARLQERKIDVVSGGTDNHVVLLDLRSIGMTGKVADLLVSDVHITANKNTVPFDPESPFVTSGLRLGTAALTTRGFDEKAFHEVADVIADRLQNPEDDAIQARCLERVSDLCKRFPLYAPALEPALA.

Residues Leu126 and 130–132 (GHL) each bind (6S)-5,6,7,8-tetrahydrofolate. Lys235 carries the N6-(pyridoxal phosphate)lysine modification. Position 359–361 (359–361 (SPF)) interacts with (6S)-5,6,7,8-tetrahydrofolate.

Belongs to the SHMT family. As to quaternary structure, homodimer. Requires pyridoxal 5'-phosphate as cofactor.

Its subcellular location is the cytoplasm. The enzyme catalyses (6R)-5,10-methylene-5,6,7,8-tetrahydrofolate + glycine + H2O = (6S)-5,6,7,8-tetrahydrofolate + L-serine. It functions in the pathway one-carbon metabolism; tetrahydrofolate interconversion. It participates in amino-acid biosynthesis; glycine biosynthesis; glycine from L-serine: step 1/1. Functionally, catalyzes the reversible interconversion of serine and glycine with tetrahydrofolate (THF) serving as the one-carbon carrier. This reaction serves as the major source of one-carbon groups required for the biosynthesis of purines, thymidylate, methionine, and other important biomolecules. Also exhibits THF-independent aldolase activity toward beta-hydroxyamino acids, producing glycine and aldehydes, via a retro-aldol mechanism. The chain is Serine hydroxymethyltransferase from Synechococcus sp. (strain CC9311).